The chain runs to 406 residues: uncharacterized protein (406 aa).

Helical transmembrane passes span 7–27 (SILF…MVVI), 43–63 (VTLI…LITI), 69–89 (LTII…FYAL), 98–118 (LILV…FSPL), 155–175 (GLII…FLLF), 220–240 (IIIM…SVSL), 253–273 (WWGF…FIIY), 297–317 (LTLI…VLFM), 352–372 (VQFI…FLGV), and 374–394 (LVYV…FSQL).

Belongs to the major facilitator superfamily.

It localises to the cell membrane. This is an uncharacterized protein from Bacillus subtilis (strain 168).